Reading from the N-terminus, the 402-residue chain is NADH-quinone oxidoreductase subunit D (402 aa).

The protein belongs to the complex I 49 kDa subunit family. As to quaternary structure, NDH-1 is composed of 14 different subunits. Subunits NuoB, C, D, E, F, and G constitute the peripheral sector of the complex.

The protein localises to the cell inner membrane. It carries out the reaction a quinone + NADH + 5 H(+)(in) = a quinol + NAD(+) + 4 H(+)(out). Its function is as follows. NDH-1 shuttles electrons from NADH, via FMN and iron-sulfur (Fe-S) centers, to quinones in the respiratory chain. The immediate electron acceptor for the enzyme in this species is believed to be ubiquinone. Couples the redox reaction to proton translocation (for every two electrons transferred, four hydrogen ions are translocated across the cytoplasmic membrane), and thus conserves the redox energy in a proton gradient. The polypeptide is NADH-quinone oxidoreductase subunit D (Azorhizobium caulinodans (strain ATCC 43989 / DSM 5975 / JCM 20966 / LMG 6465 / NBRC 14845 / NCIMB 13405 / ORS 571)).